We begin with the raw amino-acid sequence, 336 residues long: Atypical chemokine receptor 1 (336 aa).

At 1 to 63 the chain is on the extracellular side; the sequence is MGNCLHQAEL…CNLLDDSSLP (63 aa). Residues asparagine 16 and asparagine 33 are each glycosylated (N-linked (GlcNAc...) asparagine). 2 cysteine pairs are disulfide-bonded: cysteine 51/cysteine 276 and cysteine 129/cysteine 195. A helical transmembrane segment spans residues 64–84; the sequence is FFILASVLGILASSTVLFMLF. Over 85–95 the chain is Cytoplasmic; that stretch reads RPLFRWQLCPG. The chain crosses the membrane as a helical span at residues 96 to 116; sequence WPVLAQLAVGSALFSIVVPIL. The Extracellular portion of the chain corresponds to 117 to 129; sequence APGLGNTRSSALC. Residues 130–153 traverse the membrane as a helical segment; that stretch reads SLGYCVWYGSAFAQALLLGCHASL. Residues 154 to 166 lie on the Cytoplasmic side of the membrane; it reads GPKLGAGQVPGLT. Residues 167–187 traverse the membrane as a helical segment; the sequence is LGLTVGLWGAAALLTVPITLA. Residues 188–207 lie on the Extracellular side of the membrane; the sequence is SGASDGLCTPIYSTELKALQ. A helical membrane pass occupies residues 208–228; it reads ATHTVACFAIFVLLPLGLFGA. The Cytoplasmic segment spans residues 229 to 244; sequence KGVKKALGMGPGPWMT. A helical membrane pass occupies residues 245–265; sequence ILWIWFIFWWPHGVVLGLDFL. Residues 266–287 are Extracellular-facing; it reads VRSKLLLLPTCLAQQVLDLLLN. Residues 288–308 form a helical membrane-spanning segment; that stretch reads LAEALTIVHCVATPLLLALFC. Over 309-336 the chain is Cytoplasmic; that stretch reads HQATRTLLPSLPLPERWSSPVDTLGSKS.

Belongs to the G-protein coupled receptor 1 family. Atypical chemokine receptor subfamily.

It is found in the early endosome. The protein resides in the recycling endosome. It localises to the membrane. Its function is as follows. Atypical chemokine receptor that controls chemokine levels and localization via high-affinity chemokine binding that is uncoupled from classic ligand-driven signal transduction cascades, resulting instead in chemokine sequestration, degradation, or transcytosis. Also known as interceptor (internalizing receptor) or chemokine-scavenging receptor or chemokine decoy receptor. Has a promiscuous chemokine-binding profile, interacting with inflammatory chemokines of both the CXC and the CC subfamilies but not with homeostatic chemokines. Acts as a receptor for chemokines including CCL2, CCL5, CCL7, CCL11, CCL13, CCL14, CCL17, CXCL5, CXCL6, IL8/CXCL8, CXCL11, GRO, RANTES, MCP-1 and TARC. May regulate chemokine bioavailability and, consequently, leukocyte recruitment through two distinct mechanisms: when expressed in endothelial cells, it sustains the abluminal to luminal transcytosis of tissue-derived chemokines and their subsequent presentation to circulating leukocytes; when expressed in erythrocytes, serves as blood reservoir of cognate chemokines but also as a chemokine sink, buffering potential surges in plasma chemokine levels. The sequence is that of Atypical chemokine receptor 1 (ACKR1) from Sapajus apella (Brown-capped capuchin).